We begin with the raw amino-acid sequence, 89 residues long: MSITAEEKARLIKEYATKEGDTGSPEVQIAILSSRIATLTEHFKSHKKDNHSRRGLLMMVAQRRKLLDYVKGKDEARYQKLISSLGLRR.

The protein belongs to the universal ribosomal protein uS15 family. Part of the 30S ribosomal subunit. Forms a bridge to the 50S subunit in the 70S ribosome, contacting the 23S rRNA.

One of the primary rRNA binding proteins, it binds directly to 16S rRNA where it helps nucleate assembly of the platform of the 30S subunit by binding and bridging several RNA helices of the 16S rRNA. Its function is as follows. Forms an intersubunit bridge (bridge B4) with the 23S rRNA of the 50S subunit in the ribosome. The polypeptide is Small ribosomal subunit protein uS15 (Dinoroseobacter shibae (strain DSM 16493 / NCIMB 14021 / DFL 12)).